A 258-amino-acid polypeptide reads, in one-letter code: MLIVLSPAKSLDYKTPFKVKAPTLPEFVSESAKLITDLKKLAPQDVAKLMGLSDQLAALNVGRYRDWSKKFTEENSKPAIYAFDGDVYDGFDVKTLKPKAVEFAQDHIRILSGLYGVLKPLDLMQPYRLEMGTSFKNARGKDLYAFWGNRVTDSLKKALDKQKNPVLLNLASEEYFKVLQPKELDCPVISPVFQDAKDGKYKIISFYAKRARGLMARYVVENRITDPVDLKGFSLDDYKYYAAESKIDKPVFRRVERK.

This sequence belongs to the UPF0246 family.

The chain is UPF0246 protein Pnec_1068 from Polynucleobacter necessarius subsp. necessarius (strain STIR1).